The sequence spans 438 residues: Minor capsid protein p49 (438 aa).

The interval 134-167 (PQVSGLKDTQKNCLTQPSSLPSLKNPKNSSVPST) is disordered. The segment covering 144–167 (KNCLTQPSSLPSLKNPKNSSVPST) has biased composition (polar residues).

Belongs to the asfivirus p49 structural protein family.

Its subcellular location is the virion. Its function is as follows. Together with the penton and the other minor capsid proteins (M1249L, p17), forms a complicated network immediately below the outer capsid shell, stabilizing the whole capsid. Plays an essential role in the formation of infectious virus particles. Especially required for the formation of the capsid vertices. During virion assembly, associates with the membrane and probably mediates the docking of the penton complex to the inner membrane, where it recruits the capsomers to form the penton core. The sequence is that of Minor capsid protein p49 from Ornithodoros (relapsing fever ticks).